We begin with the raw amino-acid sequence, 250 residues long: Putative inner dynein arm light chain, axonemal (250 aa).

Positions 168 to 250 (MRKALQAHEE…QLEGITAPKK (83 aa)) form a coiled coil.

It belongs to the inner dynein arm light chain family.

It localises to the cell projection. Its subcellular location is the cilium. The protein resides in the dynein axonemal particle. May play a dynamic role in flagellar motility. This is Putative inner dynein arm light chain, axonemal from Drosophila melanogaster (Fruit fly).